The sequence spans 152 residues: MTEYKKVIAHNKKALFQYFIEERLEAGIVLKGSEVRSLRQGKASIEESHAADTGHEVFLYNCHIAEYEKANRFNHATRRPRKLLLHTKEIKKIIGRIRIKGYTLVALSMYFNKKNKVKVELGIAKGKKLHDKRESIKEKDWKRDQSRLIRQK.

Belongs to the SmpB family.

The protein localises to the cytoplasm. Required for rescue of stalled ribosomes mediated by trans-translation. Binds to transfer-messenger RNA (tmRNA), required for stable association of tmRNA with ribosomes. tmRNA and SmpB together mimic tRNA shape, replacing the anticodon stem-loop with SmpB. tmRNA is encoded by the ssrA gene; the 2 termini fold to resemble tRNA(Ala) and it encodes a 'tag peptide', a short internal open reading frame. During trans-translation Ala-aminoacylated tmRNA acts like a tRNA, entering the A-site of stalled ribosomes, displacing the stalled mRNA. The ribosome then switches to translate the ORF on the tmRNA; the nascent peptide is terminated with the 'tag peptide' encoded by the tmRNA and targeted for degradation. The ribosome is freed to recommence translation, which seems to be the essential function of trans-translation. This Rickettsia peacockii (strain Rustic) protein is SsrA-binding protein.